The sequence spans 292 residues: Protein/nucleic acid deglycase HchA (292 aa).

The segment covering 1–12 (MSQDVNELSKQP) has biased composition (polar residues). Residues 1–23 (MSQDVNELSKQPTPDKAEDNAFF) are disordered. Cys-190 (nucleophile) is an active-site residue.

Belongs to the peptidase C56 family. HchA subfamily.

It is found in the cytoplasm. The enzyme catalyses N(omega)-(1-hydroxy-2-oxopropyl)-L-arginyl-[protein] + H2O = lactate + L-arginyl-[protein] + H(+). It catalyses the reaction N(6)-(1-hydroxy-2-oxopropyl)-L-lysyl-[protein] + H2O = lactate + L-lysyl-[protein] + H(+). The catalysed reaction is S-(1-hydroxy-2-oxopropyl)-L-cysteinyl-[protein] + H2O = lactate + L-cysteinyl-[protein] + H(+). It carries out the reaction N(omega)-(1-hydroxy-2-oxoethyl)-L-arginyl-[protein] + H2O = L-arginyl-[protein] + glycolate + H(+). The enzyme catalyses N(6)-(1-hydroxy-2-oxoethyl)-L-lysyl-[protein] + H2O = glycolate + L-lysyl-[protein] + H(+). It catalyses the reaction S-(1-hydroxy-2-oxoethyl)-L-cysteinyl-[protein] + H2O = glycolate + L-cysteinyl-[protein] + H(+). The catalysed reaction is N(2)-(1-hydroxy-2-oxopropyl)-dGTP + H2O = lactate + dGTP + H(+). It carries out the reaction N(2)-(1-hydroxy-2-oxopropyl)-GTP + H2O = lactate + GTP + H(+). The enzyme catalyses N(2)-(1-hydroxy-2-oxopropyl)-GDP + H2O = lactate + GDP + H(+). It catalyses the reaction N(2)-(1-hydroxy-2-oxopropyl)-GMP + H2O = lactate + GMP + H(+). The catalysed reaction is N(2)-(1-hydroxy-2-oxoethyl)-dGTP + H2O = dGTP + glycolate + H(+). It carries out the reaction N(2)-(1-hydroxy-2-oxoethyl)-GTP + H2O = glycolate + GTP + H(+). The enzyme catalyses N(2)-(1-hydroxy-2-oxoethyl)-GDP + H2O = glycolate + GDP + H(+). It catalyses the reaction N(2)-(1-hydroxy-2-oxoethyl)-GMP + H2O = glycolate + GMP + H(+). The catalysed reaction is an N(2)-(1-hydroxy-2-oxopropyl)-guanosine in RNA + H2O = a guanosine in RNA + lactate + H(+). It carries out the reaction an N(2)-(1-hydroxy-2-oxopropyl)-2'-deoxyguanosine in DNA + H2O = a 2'-deoxyguanosine in DNA + lactate + H(+). The enzyme catalyses an N(2)-(1-hydroxy-2-oxoethyl)-guanosine in RNA + H2O = a guanosine in RNA + glycolate + H(+). It catalyses the reaction an N(2)-(1-hydroxy-2-oxoethyl)-2'-deoxyguanosine in DNA + H2O = a 2'-deoxyguanosine in DNA + glycolate + H(+). In terms of biological role, protein and nucleotide deglycase that catalyzes the deglycation of the Maillard adducts formed between amino groups of proteins or nucleotides and reactive carbonyl groups of glyoxals. Thus, functions as a protein deglycase that repairs methylglyoxal- and glyoxal-glycated proteins, and releases repaired proteins and lactate or glycolate, respectively. Deglycates cysteine, arginine and lysine residues in proteins, and thus reactivates these proteins by reversing glycation by glyoxals. Acts on early glycation intermediates (hemithioacetals and aminocarbinols), preventing the formation of Schiff bases and advanced glycation endproducts (AGE). Also functions as a nucleotide deglycase able to repair glycated guanine in the free nucleotide pool (GTP, GDP, GMP, dGTP) and in DNA and RNA. Is thus involved in a major nucleotide repair system named guanine glycation repair (GG repair), dedicated to reversing methylglyoxal and glyoxal damage via nucleotide sanitization and direct nucleic acid repair. Plays an important role in protecting cells from carbonyl stress. The sequence is that of Protein/nucleic acid deglycase HchA from Staphylococcus aureus (strain MSSA476).